The following is a 466-amino-acid chain: 3-isopropylmalate dehydratase large subunit (466 aa).

Cys-347, Cys-407, and Cys-410 together coordinate [4Fe-4S] cluster.

Belongs to the aconitase/IPM isomerase family. LeuC type 1 subfamily. Heterodimer of LeuC and LeuD. It depends on [4Fe-4S] cluster as a cofactor.

The catalysed reaction is (2R,3S)-3-isopropylmalate = (2S)-2-isopropylmalate. Its pathway is amino-acid biosynthesis; L-leucine biosynthesis; L-leucine from 3-methyl-2-oxobutanoate: step 2/4. Its function is as follows. Catalyzes the isomerization between 2-isopropylmalate and 3-isopropylmalate, via the formation of 2-isopropylmaleate. The chain is 3-isopropylmalate dehydratase large subunit from Escherichia coli O9:H4 (strain HS).